The sequence spans 204 residues: MPYPFKLPELGYPYEALEPHIDARTMEIHHQKHHGAYVTNLNAALEKYPYLQGAEVETLLRHLTALPADIQAAVRNNGGGHLNHSLFWRLLTPGGAKEPVGELKKAIDEQFGGFAALKEKLTQAAMGRFGSGWAWLVKDPFGKLHVISTANQDNPVMGGFAPIVGIDVWEHAYYLKYQNRRADYLQAIWNVLNWDVAEEIYKGA.

4 residues coordinate Mn(2+): H29, H84, D167, and H171.

It belongs to the iron/manganese superoxide dismutase family. In terms of assembly, homotetramer. Mn(2+) is required as a cofactor.

It carries out the reaction 2 superoxide + 2 H(+) = H2O2 + O2. In terms of biological role, destroys superoxide anion radicals which are normally produced within the cells and which are toxic to biological systems. The sequence is that of Superoxide dismutase [Mn] (sodA) from Thermus aquaticus.